The primary structure comprises 156 residues: Cyanate hydratase (156 aa).

Active-site residues include Arg96, Glu99, and Ser122.

This sequence belongs to the cyanase family.

It catalyses the reaction cyanate + hydrogencarbonate + 3 H(+) = NH4(+) + 2 CO2. Catalyzes the reaction of cyanate with bicarbonate to produce ammonia and carbon dioxide. The protein is Cyanate hydratase of Burkholderia vietnamiensis (strain G4 / LMG 22486) (Burkholderia cepacia (strain R1808)).